Consider the following 98-residue polypeptide: NADH-ubiquinone oxidoreductase chain 4L (98 aa).

3 consecutive transmembrane segments (helical) span residues 1–21 (MSLVYMNIMTAFMVALAGLLM), 29–49 (SLLCLEGMMLSLFVMASLTIL), and 59–79 (MPIILLVFAACEAALGLSLLV).

Belongs to the complex I subunit 4L family. As to quaternary structure, core subunit of respiratory chain NADH dehydrogenase (Complex I) which is composed of 45 different subunits.

The protein localises to the mitochondrion inner membrane. The catalysed reaction is a ubiquinone + NADH + 5 H(+)(in) = a ubiquinol + NAD(+) + 4 H(+)(out). Its function is as follows. Core subunit of the mitochondrial membrane respiratory chain NADH dehydrogenase (Complex I) which catalyzes electron transfer from NADH through the respiratory chain, using ubiquinone as an electron acceptor. Part of the enzyme membrane arm which is embedded in the lipid bilayer and involved in proton translocation. The sequence is that of NADH-ubiquinone oxidoreductase chain 4L (MT-ND4L) from Cervus elaphus (Red deer).